Here is a 311-residue protein sequence, read N- to C-terminus: Pyrimidine-specific ribonucleoside hydrolase RihA (311 aa).

His-240 is a catalytic residue.

It belongs to the IUNH family. RihA subfamily.

In terms of biological role, hydrolyzes cytidine or uridine to ribose and cytosine or uracil, respectively. The sequence is that of Pyrimidine-specific ribonucleoside hydrolase RihA from Shigella boydii serotype 4 (strain Sb227).